The primary structure comprises 454 residues: Glutamyl-tRNA(Gln) amidotransferase subunit A (454 aa).

Residues Lys77 and Ser152 each act as charge relay system in the active site. Ser176 (acyl-ester intermediate) is an active-site residue.

This sequence belongs to the amidase family. GatA subfamily. As to quaternary structure, heterotrimer of A, B and C subunits.

It catalyses the reaction L-glutamyl-tRNA(Gln) + L-glutamine + ATP + H2O = L-glutaminyl-tRNA(Gln) + L-glutamate + ADP + phosphate + H(+). Its function is as follows. Allows the formation of correctly charged Gln-tRNA(Gln) through the transamidation of misacylated Glu-tRNA(Gln) in organisms which lack glutaminyl-tRNA synthetase. The reaction takes place in the presence of glutamine and ATP through an activated gamma-phospho-Glu-tRNA(Gln). In Methanothermobacter thermautotrophicus (strain ATCC 29096 / DSM 1053 / JCM 10044 / NBRC 100330 / Delta H) (Methanobacterium thermoautotrophicum), this protein is Glutamyl-tRNA(Gln) amidotransferase subunit A (gatA).